The chain runs to 71 residues: Large ribosomal subunit protein bL31 (71 aa).

Zn(2+)-binding residues include Cys16, Cys18, Cys37, and Cys40.

This sequence belongs to the bacterial ribosomal protein bL31 family. Type A subfamily. Part of the 50S ribosomal subunit. Zn(2+) is required as a cofactor.

Functionally, binds the 23S rRNA. The chain is Large ribosomal subunit protein bL31 from Aeromonas salmonicida (strain A449).